The chain runs to 657 residues: Glycogen debranching enzyme (657 aa).

Catalysis depends on D336, which acts as the Nucleophile. E371 serves as the catalytic Proton donor. Residues 458–467 are compositionally biased toward basic and acidic residues; that stretch reads NEANGEENRD. The segment at 458-479 is disordered; that stretch reads NEANGEENRDGTNNNYSNNHGK.

It belongs to the glycosyl hydrolase 13 family.

It carries out the reaction Hydrolysis of (1-&gt;6)-alpha-D-glucosidic linkages to branches with degrees of polymerization of three or four glucose residues in limit dextrin.. The protein operates within glycan degradation; glycogen degradation. Functionally, removes maltotriose and maltotetraose chains that are attached by 1,6-alpha-linkage to the limit dextrin main chain, generating a debranched limit dextrin. This chain is Glycogen debranching enzyme, found in Escherichia coli O8 (strain IAI1).